We begin with the raw amino-acid sequence, 336 residues long: Glycerol-3-phosphate dehydrogenase [NAD(P)+] (336 aa).

Residues Ser11, Trp12, and Lys106 each coordinate NADPH. Sn-glycerol 3-phosphate contacts are provided by Lys106, Gly134, and Ser136. NADPH is bound at residue Ala138. 5 residues coordinate sn-glycerol 3-phosphate: Lys189, Asp242, Ser252, Arg253, and Asn254. Lys189 functions as the Proton acceptor in the catalytic mechanism. NADPH is bound at residue Arg253. 2 residues coordinate NADPH: Val277 and Glu279.

The protein belongs to the NAD-dependent glycerol-3-phosphate dehydrogenase family.

The protein resides in the cytoplasm. It catalyses the reaction sn-glycerol 3-phosphate + NAD(+) = dihydroxyacetone phosphate + NADH + H(+). It carries out the reaction sn-glycerol 3-phosphate + NADP(+) = dihydroxyacetone phosphate + NADPH + H(+). It participates in membrane lipid metabolism; glycerophospholipid metabolism. In terms of biological role, catalyzes the reduction of the glycolytic intermediate dihydroxyacetone phosphate (DHAP) to sn-glycerol 3-phosphate (G3P), the key precursor for phospholipid synthesis. This Agathobacter rectalis (strain ATCC 33656 / DSM 3377 / JCM 17463 / KCTC 5835 / VPI 0990) (Eubacterium rectale) protein is Glycerol-3-phosphate dehydrogenase [NAD(P)+].